The primary structure comprises 120 residues: Cu-Zn superoxide dismutase-like protein OPG175 (120 aa).

Cysteine 52 and cysteine 102 are disulfide-bonded.

The protein belongs to the Cu-Zn superoxide dismutase family.

It localises to the virion. The protein localises to the host cytoplasm. Superoxide dismutase-like protein with no enzymatic activity. The protein is Cu-Zn superoxide dismutase-like protein OPG175 (OPG175) of Vaccinia virus (strain Tashkent) (VACV).